The sequence spans 507 residues: Monocarboxylate transporter 9 (507 aa).

Residues 1-12 (MVYRKPPDGGWG) lie on the Extracellular side of the membrane. Residues 13-33 (WVIVIVSFFTQFLCYGSPLAV) form a helical membrane-spanning segment. Residues 34 to 52 (GVLYLEWLDAFGEGKGKTA) are Cytoplasmic-facing. A helical membrane pass occupies residues 53 to 73 (WVGSLANGIGLLASPVCSICV). Residues 74-79 (SSFGAR) lie on the Extracellular side of the membrane. Residues 80-100 (PVAIFSGFMVAGGLMMSSFAP) form a helical membrane-spanning segment. Over 101-102 (NI) the chain is Cytoplasmic. The chain crosses the membrane as a helical span at residues 103–123 (YFLYLSYGIVVGLGCGLLYNA). Topologically, residues 124-136 (TVTITCQYFDKRR) are extracellular. The chain crosses the membrane as a helical span at residues 137–157 (GLALGLISTGSSVGLFIYAAL). The Cytoplasmic segment spans residues 158–163 (QRELIE). The helical transmembrane segment at 164–184 (LYGLDGCLLIVGALSLNILAC) threads the bilayer. Topologically, residues 185–302 (GSLMRPLESS…EETVVLFKNR (118 aa)) are extracellular. Residues 303–323 (VFSALFFAILLFDIGGFPPSL) form a helical membrane-spanning segment. Over 324–340 (LMEDIARSANINEEDYH) the chain is Cytoplasmic. Residues 341–361 (MPLVSIIGIMTAIGKLILGIL) form a helical membrane-spanning segment. Over 362 to 369 (ADFKWVNT) the chain is Extracellular. A helical transmembrane segment spans residues 370–390 (LYLYVLTLLMMGAALLAIPFA). Topologically, residues 391-395 (RSYFT) are cytoplasmic. Residues 396–416 (LAVLSGILGFLTGNWSIFPYV) form a helical membrane-spanning segment. Residues 417–430 (TTKTVGIEKLTHAY) lie on the Extracellular side of the membrane. A helical membrane pass occupies residues 431 to 451 (GILMFFAGLGNSLGPPIVGWF). The Cytoplasmic portion of the chain corresponds to 452–460 (YDWTQEYDT). The helical transmembrane segment at 461–481 (AFYFSGFCVLLGGFLLLLAAL) threads the bilayer. Over 482-507 (PCWNACTDRSSKLPPNTYSYKVASSA) the chain is Extracellular.

This sequence belongs to the major facilitator superfamily. Monocarboxylate porter (TC 2.A.1.13) family.

Its subcellular location is the cell membrane. The catalysed reaction is creatine(in) = creatine(out). The enzyme catalyses (R)-carnitine(in) = (R)-carnitine(out). Functionally, extracellular pH-and Na(+)-sensitive low-affinity creatine transporter. Also functions as a pH-independent carnitine efflux transporter. This Gallus gallus (Chicken) protein is Monocarboxylate transporter 9 (SLC16A9).